A 247-amino-acid polypeptide reads, in one-letter code: MHTQVLFEHPLNEKMRTWLRIEFLIQQLSINLPIADHAGALHFFRNISDLLDVFERGEVRTELLKELERQQRKLQAWVEVPGVDQDRIEALRQQLKSAGSVLISAPRIGQQLREDRLIALVRQRLSIPGGCCSFDLPTLHIWLHLQQAQRDAQIESWLASLNPLTQALTLVLDLIRNSAPFRKQTSLNGFYQDNGDDADLLRLMLTLDSQLYPQISGHKSRFAIRFMPLDSENGLVPERLDFELACC.

Belongs to the ZapD family. As to quaternary structure, interacts with FtsZ.

The protein resides in the cytoplasm. Cell division factor that enhances FtsZ-ring assembly. Directly interacts with FtsZ and promotes bundling of FtsZ protofilaments, with a reduction in FtsZ GTPase activity. The polypeptide is Cell division protein ZapD (Salmonella dublin (strain CT_02021853)).